Consider the following 143-residue polypeptide: Small ribosomal subunit protein uS9 (143 aa).

The interval 118-143 (DSRRTEPHKPNRSTKGPRAKRQKSYR) is disordered. Residues 127–143 (PNRSTKGPRAKRQKSYR) are compositionally biased toward basic residues.

It belongs to the universal ribosomal protein uS9 family.

This chain is Small ribosomal subunit protein uS9, found in Thermococcus sibiricus (strain DSM 12597 / MM 739).